The sequence spans 372 residues: 7-methylxanthosine synthase 1 (372 aa).

Y18 is an S-adenosyl-L-homocysteine binding site. N21 and N25 together coordinate xanthosine. S-adenosyl-L-homocysteine contacts are provided by C62, N67, D101, L102, S140, F141, and C157. Xanthosine is bound at residue Y158. C159 contributes to the S-adenosyl-L-homocysteine binding site. Xanthosine contacts are provided by Q161 and W162. 4 residues coordinate Mg(2+): N179, D261, F263, and N264. Xanthosine contacts are provided by S316, Y321, and Y356.

This sequence belongs to the methyltransferase superfamily. Type-7 methyltransferase family. Mg(2+) serves as cofactor. In terms of tissue distribution, expressed in stems, young leaves, floral buds, developing endosperm and immature fruits (grains). Detected in roots and old leaves, but not in mature fruits.

It catalyses the reaction xanthosine + S-adenosyl-L-methionine = 7-methylxanthosine + S-adenosyl-L-homocysteine. It participates in alkaloid biosynthesis. Involved in the biosynthesis of caffeine. Specific for xanthosine and could not use xanthosine 5'-monophosphate (XMP) as substrate. Catalyzes the 7-N-methylation activity of xanthosine, but does not have 1-N- or 3-N-methylation activity. The polypeptide is 7-methylxanthosine synthase 1 (Coffea arabica (Arabian coffee)).